A 95-amino-acid chain; its full sequence is ESAT-6-like protein EsxA (95 aa).

It belongs to the WXG100 family. ESAT-6 subfamily. In terms of assembly, forms a tight 1:1 complex with EsxB. An artificial EsxA-EsxB heterodimer interacts with EspA.

It is found in the secreted. An exported protein. Unlike its M.tuberculosis counterpart has poor pore forming ability in artificial liposomes, does not undergo conformational change at acidic pH. Mutation of 2 residues to those found in M.tuberculosis (25-TA-26 to IH) alters the properties of this protein so that it inserts into liposomes at acidic pH, forming pores, like its M.tuberculosis counterpart. The protein is ESAT-6-like protein EsxA of Mycolicibacterium smegmatis (strain ATCC 700084 / mc(2)155) (Mycobacterium smegmatis).